A 237-amino-acid chain; its full sequence is uncharacterized protein (237 aa).

The first 27 residues, M1–A27, serve as a signal peptide directing secretion. C28 is lipidated: N-palmitoyl cysteine. A lipid anchor (S-diacylglycerol cysteine) is attached at C28.

This sequence belongs to the MG307/MG309/MG338 family.

The protein resides in the membrane. This is an uncharacterized protein from Mycoplasma pneumoniae (strain ATCC 29342 / M129 / Subtype 1) (Mycoplasmoides pneumoniae).